A 228-amino-acid polypeptide reads, in one-letter code: Cytochrome c oxidase subunit 2 (228 aa).

At 1 to 26 the chain is on the mitochondrial intermembrane side; it reads MPNWGQVMFQDAASSVMLQLVSFHDH. A helical transmembrane segment spans residues 27–47; the sequence is ALLVLTLVLTVVGYALLALML. At 48–60 the chain is on the mitochondrial matrix side; sequence NKQVNRYIMEAQT. A helical transmembrane segment spans residues 61-81; that stretch reads VETIWTILPALILLVLALPSL. Over 82–228 the chain is Mitochondrial intermembrane; the sequence is RILYITDEVS…FMSWVSNFKP (147 aa). Positions 161, 196, 198, 200, 204, and 207 each coordinate Cu cation. Position 198 (Glu-198) interacts with Mg(2+).

It belongs to the cytochrome c oxidase subunit 2 family. In terms of assembly, component of the cytochrome c oxidase (complex IV, CIV), a multisubunit enzyme composed of a catalytic core of 3 subunits and several supernumerary subunits. The complex exists as a monomer or a dimer and forms supercomplexes (SCs) in the inner mitochondrial membrane with ubiquinol-cytochrome c oxidoreductase (cytochrome b-c1 complex, complex III, CIII). Cu cation is required as a cofactor.

Its subcellular location is the mitochondrion inner membrane. The catalysed reaction is 4 Fe(II)-[cytochrome c] + O2 + 8 H(+)(in) = 4 Fe(III)-[cytochrome c] + 2 H2O + 4 H(+)(out). Component of the cytochrome c oxidase, the last enzyme in the mitochondrial electron transport chain which drives oxidative phosphorylation. The respiratory chain contains 3 multisubunit complexes succinate dehydrogenase (complex II, CII), ubiquinol-cytochrome c oxidoreductase (cytochrome b-c1 complex, complex III, CIII) and cytochrome c oxidase (complex IV, CIV), that cooperate to transfer electrons derived from NADH and succinate to molecular oxygen, creating an electrochemical gradient over the inner membrane that drives transmembrane transport and the ATP synthase. Cytochrome c oxidase is the component of the respiratory chain that catalyzes the reduction of oxygen to water. Electrons originating from reduced cytochrome c in the intermembrane space (IMS) are transferred via the dinuclear copper A center (CU(A)) of subunit 2 and heme A of subunit 1 to the active site in subunit 1, a binuclear center (BNC) formed by heme A3 and copper B (CU(B)). The BNC reduces molecular oxygen to 2 water molecules using 4 electrons from cytochrome c in the IMS and 4 protons from the mitochondrial matrix. The polypeptide is Cytochrome c oxidase subunit 2 (COII) (Lumbricus terrestris (Common earthworm)).